Reading from the N-terminus, the 2023-residue chain is Protein Daple (2023 aa).

Positions 11 to 131 (NFMDSPLVVW…RMLLLILGCA (121 aa)) constitute a Calponin-homology (CH) domain. Coiled coils occupy residues 250 to 415 (RQHL…LLEE), 458 to 1064 (NESA…VEKN), and 1105 to 1419 (LKQI…QYKF). Positions 1013–1035 (RHEEEAAHSEISQQTLGQTRSLP) are disordered. A compositionally biased stretch (polar residues) spans 1022–1033 (EISQQTLGQTRS). Disordered regions lie at residues 1441–1824 (KPKK…GSAS) and 1837–2023 (LRSN…YGCV). Basic and acidic residues predominate over residues 1442–1460 (PKKESSRERPDAPRERIRS). A compositionally biased stretch (pro residues) spans 1478–1491 (SAPPPPPPPLPPRQ). Composition is skewed to polar residues over residues 1497–1518 (DSMNSQSVEENHVQSPTLSSPA) and 1564–1585 (TCSTPLSRNSHNAPGFTSSSSL). Low complexity-rich tracts occupy residues 1623 to 1643 (SAEFSRNTSSSNSPVSSKGSL) and 1667 to 1704 (RLSQSSLLPRSSTLPCDSPSASRPSQRPASRRPSSPGS). Positions 1700–1728 (SSPGSEMVTLEEFLQESNALSPPTVQTGS) match the GBA motif. Composition is skewed to polar residues over residues 1714 to 1727 (QESNALSPPTVQTG), 1752 to 1763 (TPTNYVTPTVKT), 1785 to 1799 (LTDTSTPPSHSQTLP), and 1809 to 1824 (ALQQSSPRGSVGGSAS). The span at 1890-1904 (VDPRRLSLAQPRDEF) shows a compositional bias: basic and acidic residues. The segment covering 1927–1945 (GSGSSRAGAARSGSAQPRG) has biased composition (low complexity). Residues 1974-1988 (QEQREAESPLLKKAD) are compositionally biased toward basic and acidic residues. Positions 1989-2014 (TTNLSYASKEQPTSKPASPDPNNDPQ) are enriched in polar residues. The PDZ-binding signature appears at 2020-2023 (YGCV).

It belongs to the CCDC88 family.

The protein resides in the cytoplasm. It localises to the cell junction. Positive regulator of Wnt signaling, acting synergistically with dvl2. Functions upstream of ctnnb1/beta-catenin in the canonical Wnt pathway, and also activates jnk in the Wnt/planar cell polarity (PCP) pathway. Acts as a non-receptor guanine nucleotide exchange factor which binds to and activates guanine nucleotide-binding protein G(i) alpha (Gi-alpha) subunits. This promotes apical cell constriction and subsequent bending of the neural plate during neurulation via arhgef18. This Danio rerio (Zebrafish) protein is Protein Daple.